The sequence spans 754 residues: Catalase-peroxidase (754 aa).

A disordered region spans residues 1 to 29; it reads MGTQPARKLRNRVFPHPHNHRKEKPMAND. A compositionally biased stretch (basic residues) spans 7–23; that stretch reads RKLRNRVFPHPHNHRKE. Catalysis depends on Trp-106, which acts as the Tryptophan radical intermediate. A cross-link (tryptophyl-tyrosyl-methioninium (Trp-Tyr) (with M-275)) is located at residues 122–249; sequence WHAAGTYRIA…LAAVQMGLIY (128 aa). His-123 acts as the Proton acceptor in catalysis. The segment at residues 249–275 is a cross-link (tryptophyl-tyrosyl-methioninium (Tyr-Met) (with W-122)); it reads YVNPEGVDGHPDPLCTAQDVRTTFARM. Position 290 (His-290) interacts with heme b.

Belongs to the peroxidase family. Peroxidase/catalase subfamily. As to quaternary structure, homodimer. Heme b serves as cofactor. Formation of the three residue Trp-Tyr-Met cross-link is important for the catalase, but not the peroxidase activity of the enzyme.

It catalyses the reaction H2O2 + AH2 = A + 2 H2O. It carries out the reaction 2 H2O2 = O2 + 2 H2O. In terms of biological role, bifunctional enzyme with both catalase and broad-spectrum peroxidase activity. Also displays NADH oxidase, isoniazid hydrazine lyase and isonicotinoyl-NAD synthase activities. The chain is Catalase-peroxidase from Synechocystis sp. (strain ATCC 27184 / PCC 6803 / Kazusa).